An 852-amino-acid chain; its full sequence is DNA repair protein rhp54 (852 aa).

2 short sequence motifs (nuclear localization signal) span residues 35 to 51 and 178 to 181; these read KKFKCPSLVISEKRKEL and KRKK. A compositionally biased stretch (basic and acidic residues) spans 187 to 205; sequence NRKGKKEISDSEPESDHDS. The segment at 187 to 208 is disordered; the sequence is NRKGKKEISDSEPESDHDSCVS. The Helicase ATP-binding domain occupies 281-459; it reads GRIDRCANGC…FSLLNFANPG (179 aa). 294-301 serves as a coordination point for ATP; that stretch reads DEMGLGKT. A DEGH box motif is present at residues 410–413; it reads DEGH. One can recognise a Helicase C-terminal domain in the interval 614 to 767; sequence VLERMLYQIK…CVVDEAQDVE (154 aa).

Belongs to the SNF2/RAD54 helicase family. Homohexamer. Interacts with rhp51.

The protein resides in the nucleus. It catalyses the reaction ATP + H2O = ADP + phosphate + H(+). Functionally, plays an essential role in homologous recombination (HR) which is a major pathway for repairing DNA double-strand breaks (DSBs), single-stranded DNA (ssDNA) gaps, and stalled or collapsed replication forks. Acts as a molecular motor during the homology search and guides RAD51 ssDNA along a donor dsDNA thereby changing the homology search from the diffusion-based mechanism to a motor-guided mechanism. Plays also an essential role in RAD51-mediated synaptic complex formation which consists of three strands encased in a protein filament formed once homology is recognized. Once DNA strand exchange occured, dissociates RAD51 from nucleoprotein filaments formed on dsDNA. The chain is DNA repair protein rhp54 (rhp54) from Schizosaccharomyces pombe (strain 972 / ATCC 24843) (Fission yeast).